Reading from the N-terminus, the 623-residue chain is MEHAVAPCVLYPGTEPGAAGESESEGAASPAQTPCSLGASLCFSSGEESPPQSLASAAEGAATSPPSSGGPRVVERQWEAGSAGAASPEELASPEERACPEEPAAPSPEPRVWLEDPASPEEPGEPAPVPPGFGAVYGEPDLVLEVSGRRLRAHKAVLAARSDYFRARASRDVLRVQGVSLTALRLLLADAYSGRMAGVRPDNVAEVVAGARRLQLPGAAQRATDAVGPQLSLANCYEVLSAAKRQRLNELRDAAYCFMSDHYLEVLREPAVFGRLSGAERDLLLRRRLRAGRAHLLAAALGPAGERAGSRPQSPSGDADARGDAAVYCFHAAAGEWRELTRLPEGAPARGCGLCVLYNYLFVAGGVAPAGPDGRARPSDQVFCYNPATDSWSAVRPLRQARSQLRLLALDGHLYAVGGECLLSVERYDPRADRWAPVAPLPRGAFAVAHEATTCHGEIYVSGGSLFYRLLKYDPRRDEWQECPCSSSRERSADMVALDGFIYRFDLSGSRGEAQAAGPSGVSVSRYHCLAKQWSPCVAPLRLPGGPTGLQPFRCAALDGAIYCVSRAGTWRFQPAREGEAGGDAGQGGGFEALGAPLDVRGVLIPFALSLPEKPPRGEQGAP.

The disordered stretch occupies residues 1–129 (MEHAVAPCVL…PEEPGEPAPV (129 aa)). Positions 12 to 31 (PGTEPGAAGESESEGAASPA) are enriched in low complexity. Polar residues predominate over residues 42–55 (CFSSGEESPPQSLA). Ser-64, Ser-67, Ser-87, and Ser-107 each carry phosphoserine. Over residues 79-91 (EAGSAGAASPEEL) the composition is skewed to low complexity. In terms of domain architecture, BTB spans 140–196 (PDLVLEVSGRRLRAHKAVLAARSDYFRARASRDVLRVQGVSLTALRLLLADAYSGRM). 4 Kelch repeats span residues 311–359 (RPQS…VLYN), 360–412 (YLFV…ALDG), 413–455 (HLYA…ATTC), and 458–500 (EIYV…ALDG).

The chain is Kelch repeat and BTB domain-containing protein 11 (KBTBD11) from Homo sapiens (Human).